We begin with the raw amino-acid sequence, 159 residues long: Nucleotide-binding protein Pmen_0939 (159 aa).

The protein belongs to the YajQ family.

Nucleotide-binding protein. The chain is Nucleotide-binding protein Pmen_0939 from Ectopseudomonas mendocina (strain ymp) (Pseudomonas mendocina).